The primary structure comprises 237 residues: Placenta-expressed transcript 1 protein (237 aa).

A signal peptide spans 1-27 (MLSLRSLLPHLGLFLCLALHLSPSLSA). Asparagine 30, asparagine 67, asparagine 103, and asparagine 136 each carry an N-linked (GlcNAc...) asparagine glycan. A compositionally biased stretch (polar residues) spans 145–162 (KMEQVQPSASTPIPESSE). Residues 145-170 (KMEQVQPSASTPIPESSETSQTINTT) are disordered. Serine 218 carries the GPI-anchor amidated serine lipid modification. The propeptide at 219–237 (PLAGALHILLVFLISKLLF) is removed in mature form.

In terms of processing, N-glycosylated. Post-translationally, GPI-anchored. In terms of tissue distribution, present in hair follicle cells and sebaceous gland of skin, ciliated epithelial cells of trachea and bronchial tube, striated portion of submandibular gland, distal convoluted tubule cells of kidney, ciliated epithelial cells of oviduct, medulla of adrenal gland and anterior lobe of pituitary gland. Expressed in keratinocytes of the hair follicle at the trichilemmal zone corresponding to the terminally differentiated outermost suprabasal outer root sheath (ORS), including that of the sebaceous gland duct (SGD) and the directly adjacent upper distal end of the companion layer (CL). Expression is similar in all hair follicle growth stages. Also detected during both the early and late anagen phases above the bulge of stem cells. Expressed at the leading edge of the epidermal wound. Not expressed in the interfollicular epidermis (IFE), inner root sheath (IRS) and hair fiber. Highly expressed in placenta. Detected in mammary and prostate epithelia and in the pancreas (at protein level).

It localises to the apical cell membrane. In terms of biological role, modulates leading keratinocyte migration and cellular adhesion to matrix proteins during a wound-healing response and promotes wound repair. May play a role during trichilemmal differentiation of the hair follicle. The polypeptide is Placenta-expressed transcript 1 protein (Plet1) (Mus musculus (Mouse)).